Reading from the N-terminus, the 572-residue chain is Dityrosine transporter 1 (572 aa).

Disordered stretches follow at residues 1-28 and 49-95; these read MGSE…STFH and RANI…SPDT. The Cytoplasmic segment spans residues 1–110; sequence MGSEPFQKKN…YTYFSKDQRL (110 aa). Residues 13–28 are compositionally biased toward polar residues; the sequence is LQINSQESGTTRSTFH. Basic and acidic residues predominate over residues 50–62; that stretch reads ANIDHDVFHEHPD. Polar residues predominate over residues 83–95; the sequence is SSNSQSRDPSPDT. A helical membrane pass occupies residues 111–131; that stretch reads IIFGIIIFIGFLGPMSGNIYI. Topologically, residues 132–149 are extracellular; sequence PALPLLQREYDVSATTIN. Residues 150–170 form a helical membrane-spanning segment; it reads ATVSVFMAVFSVGPLFWGALA. Topologically, residues 171–184 are cytoplasmic; it reads DFGGRKFLYMVSLS. A helical membrane pass occupies residues 185–205; the sequence is LMLIVNILLAAVPVNIAALFV. Topologically, residues 206 to 207 are extracellular; it reads LR. The chain crosses the membrane as a helical span at residues 208 to 228; sequence IFQAFASSSVISLGAGTVTDV. The Cytoplasmic portion of the chain corresponds to 229 to 240; it reads VPPKHRGKAIAY. The helical transmembrane segment at 241–261 threads the bilayer; it reads FMMGPNMGPIIAPIVAGLILM. Topologically, residues 262-267 are extracellular; the sequence is KGNYWR. A helical transmembrane segment spans residues 268 to 288; that stretch reads WLFGFTSIMTGIALILVTALL. At 289-366 the chain is on the cytoplasmic side; the sequence is PETLRCIVGN…TLYWKMIKCP (78 aa). The chain crosses the membrane as a helical span at residues 367 to 387; the sequence is PIIITSVSTALLFSSYYAFSV. Residues 388 to 398 lie on the Extracellular side of the membrane; the sequence is TFSYYLEHDYR. A helical membrane pass occupies residues 399–419; the sequence is FTMLEIGAAYVCPGVAMLLGS. The Cytoplasmic portion of the chain corresponds to 420 to 446; sequence QSGGHLSDYLRSRWIKSHPKKKFPAEF. A helical transmembrane segment spans residues 447 to 469; that stretch reads RLLLNLIGILLTICGTIGYGWAI. Topologically, residues 470–472 are extracellular; it reads FFH. A helical transmembrane segment spans residues 473–493; the sequence is YHFVVLLVFSALTAFGMTWCS. Residues 494–520 are Cytoplasmic-facing; it reads NTSMTYLTELFPKRAAGTVAVSSFFRN. The chain crosses the membrane as a helical span at residues 521–541; it reads VGAAISSAIILQLCNAMGIGW. C542 is a topological domain (extracellular). A helical transmembrane segment spans residues 543–563; it reads FTGLGLCSSISLIGILYLLIF. The segment at 548-572 is required for the localization to the prospore membrane; sequence LCSSISLIGILYLLIFQRKYTAKEF. Topologically, residues 564 to 572 are cytoplasmic; the sequence is QRKYTAKEF.

It belongs to the major facilitator superfamily. CAR1 family. Post-translationally, phosphorylated.

The protein localises to the prospore membrane. Its function is as follows. Prospore-specific dityrosine transporter responsible for translocation of dityrosine through the prospore membrane and required for the formation of the outermost layer of the spore. This Saccharomyces cerevisiae (strain ATCC 204508 / S288c) (Baker's yeast) protein is Dityrosine transporter 1 (DTR1).